The primary structure comprises 164 residues: V-type proton ATPase 16 kDa proteolipid subunit (164 aa).

The Lumenal segment spans residues 1–9; the sequence is MSNFAGDET. The chain crosses the membrane as a helical span at residues 10-32; it reads APFFGFLGAAAALVFSCMGAAYG. The Cytoplasmic portion of the chain corresponds to 33–54; it reads TAKSGVGVASMGVMRPELVMKS. Residues 55 to 75 form a helical membrane-spanning segment; sequence IVPVVMAGVLGIYGLIIAVII. At 76–94 the chain is on the lumenal side; the sequence is STGINPKTKSYYLFDGYAH. Residues 95–116 traverse the membrane as a helical segment; sequence LSSGLACGLAGLSAGMAIGIVG. Topologically, residues 117 to 128 are cytoplasmic; it reads DAGVRANAQQPK. The chain crosses the membrane as a helical span at residues 129-154; it reads LFVGMILILIFAEALALYGLIVGIIL. At 155–164 the chain is on the lumenal side; the sequence is SSRAGQSRAE.

This sequence belongs to the V-ATPase proteolipid subunit family. In terms of assembly, V-ATPase is a heteromultimeric enzyme composed of a peripheral catalytic V1 complex (main components: subunits A, B, C, D, E, and F) attached to an integral membrane V0 proton pore complex (main component: the proteolipid protein; which is present as a hexamer that forms the proton-conducting pore).

It is found in the vacuole membrane. In terms of biological role, proton-conducting pore forming subunit of the membrane integral V0 complex of vacuolar ATPase. V-ATPase is responsible for acidifying a variety of intracellular compartments in eukaryotic cells. The sequence is that of V-type proton ATPase 16 kDa proteolipid subunit from Solanum lycopersicum (Tomato).